The sequence spans 183 residues: Protein Syd (183 aa).

Belongs to the Syd family.

It is found in the cell inner membrane. Interacts with the SecY protein in vivo. May bind preferentially to an uncomplexed state of SecY, thus functioning either as a chelating agent for excess SecY in the cell or as a regulatory factor that negatively controls the translocase function. The chain is Protein Syd from Aliivibrio fischeri (strain MJ11) (Vibrio fischeri).